The chain runs to 763 residues: Formin-like protein 4 (763 aa).

Residues 1–33 (MAAMLMQPWPPFLPHLTLVFLTLILFFPNQSFS) form the signal peptide. The disordered stretch occupies residues 52-73 (PPVQSPVLSPPQNPSSSSSDSD). A helical membrane pass occupies residues 80-100 (AVLITAASTLLVAAVFFFLVH). Disordered regions lie at residues 185-327 (IYSK…DSDH) and 726-763 (RSSM…DSDM). Residues 205–225 (RSSTSHSVIHNDNYRNATTTH) show a composition bias toward polar residues. The span at 229-238 (VKTDSFEFVK) shows a compositional bias: basic and acidic residues. The segment covering 240 to 280 (DPTPPPPPPPPIPVKQSATPPPPPPPKLKNNGPSPPPPPPL) has biased composition (pro residues). Residues 281-292 (KKTAALSSSASK) are compositionally biased toward low complexity. Residues 303-738 (SGESSNGQVK…MGSTQQRNAV (436 aa)) form the FH2 domain. Positions 316–327 (LHWDKVNPDSDH) are enriched in basic and acidic residues. Over residues 726–736 (RSSMGSTQQRN) the composition is skewed to polar residues.

Belongs to the formin-like family. Class-I subfamily. As to quaternary structure, interacts with profilin. In terms of tissue distribution, expressed in the whole plant (at protein level).

It localises to the cell membrane. Might be involved in the organization and polarity of the actin cytoskeleton. The chain is Formin-like protein 4 (FH4) from Arabidopsis thaliana (Mouse-ear cress).